Here is a 291-residue protein sequence, read N- to C-terminus: MNTVTENVFPPREPKPKWLRVKLPTGKNYTELRGLVDKYKLNTICASGSCPNMGECWGEGTATFMILGNICTRSCGFCGVKTGRPETVDWDEPEKVARSIKLMKIKHAVITSVDRDDLKDMGSIIWAETVKAIRRMNPNTTLETLIPDFQGNTRNLDRIIEVAPEVVSHNMETVKRLTREVRIQAKYEKSLEVLRYLKAQGIKRTKSGIMLGLGEKEEEVIQVLHDLRDANVDIVTIGQYLQPSKKHLPVKEYISPEQFEKYEKIGKELGFRHVESGALVRSSYHAEKHIH.

Positions 45, 50, 56, 71, 75, 78, and 283 each coordinate [4Fe-4S] cluster. The Radical SAM core domain occupies 57–272 (WGEGTATFMI…EKIGKELGFR (216 aa)).

This sequence belongs to the radical SAM superfamily. Lipoyl synthase family. Requires [4Fe-4S] cluster as cofactor.

It is found in the mitochondrion. The enzyme catalyses [[Fe-S] cluster scaffold protein carrying a second [4Fe-4S](2+) cluster] + N(6)-octanoyl-L-lysyl-[protein] + 2 oxidized [2Fe-2S]-[ferredoxin] + 2 S-adenosyl-L-methionine + 4 H(+) = [[Fe-S] cluster scaffold protein] + N(6)-[(R)-dihydrolipoyl]-L-lysyl-[protein] + 4 Fe(3+) + 2 hydrogen sulfide + 2 5'-deoxyadenosine + 2 L-methionine + 2 reduced [2Fe-2S]-[ferredoxin]. The protein operates within protein modification; protein lipoylation via endogenous pathway; protein N(6)-(lipoyl)lysine from octanoyl-[acyl-carrier-protein]: step 2/2. Catalyzes the radical-mediated insertion of two sulfur atoms into the C-6 and C-8 positions of the octanoyl moiety bound to the lipoyl domains of lipoate-dependent enzymes, thereby converting the octanoylated domains into lipoylated derivatives. The chain is Lipoyl synthase, mitochondrial from Nematostella vectensis (Starlet sea anemone).